The sequence spans 494 residues: MSTGTFVVSQPLNYRGGARVEPVDASGTEKAFEPATGREIATFKCSGEKEVNLAVENAKAAFKIWSKKSGLERCQVLLEAARIIKERRDEIAIMETINNGKSIFEARLDVDTSWQCLEYYAGLAASMAGEHIQLPGGSFGYTRREPLGVCLGIGAWNYPFQIACWKSAPALACGNAMIFKPSPFTPVSALLLAEIYTKAGAPNGLFNVVQGGAATGQFLCQHRDVAKVSFTGSVPTGMKIMEMAAKGIKPITLELGGKSPLIIFSDCNMKNAVKGALLANFLTQGQVCCNGTRVFVQKEIADAFTKEVVRQTQRIKIGDPLLEDTRMGPLINAPHLERVLGFVRSAKEQGATVLCGGEPYAPEDPKLKHGYYMTPCILTNCTDDMTCVKEEIFGPVMSILTFETEAEVLERANDTTFGLAAGVFTRDIQRAHRVAAELQAGTCYINNYNVSPVELPFGGYKKSGFGRENGRVTIEYYSQLKTVCVEMGDVESAF.

The residue at position 2 (S2) is an N-acetylserine. At K30 the chain carries N6-acetyllysine; alternate. An N6-succinyllysine; alternate modification is found at K30. K59 is subject to N6-succinyllysine. NAD(+) contacts are provided by residues K180 and 232-236 (GSVPT). The Proton acceptor role is filled by E254. C288 (nucleophile) is an active-site residue. At K298 the chain carries N6-acetyllysine. E391 is a binding site for NAD(+).

It belongs to the aldehyde dehydrogenase family. As to quaternary structure, homotetramer. As to expression, detected in lever (at protein level).

It is found in the cytoplasm. It localises to the cytosol. It catalyses the reaction 4-(trimethylamino)butanal + NAD(+) + H2O = 4-(trimethylamino)butanoate + NADH + 2 H(+). The enzyme catalyses an aldehyde + NAD(+) + H2O = a carboxylate + NADH + 2 H(+). The catalysed reaction is 4-aminobutanal + NAD(+) + H2O = 4-aminobutanoate + NADH + 2 H(+). It carries out the reaction formaldehyde + NAD(+) + H2O = formate + NADH + 2 H(+). It catalyses the reaction acetaldehyde + NAD(+) + H2O = acetate + NADH + 2 H(+). The enzyme catalyses imidazole-4-acetaldehyde + NAD(+) + H2O = imidazole-4-acetate + NADH + 2 H(+). The catalysed reaction is acrolein + NAD(+) + H2O = acrylate + NADH + 2 H(+). It carries out the reaction (5-hydroxyindol-3-yl)acetaldehyde + NAD(+) + H2O = (5-hydroxyindol-3-yl)acetate + NADH + 2 H(+). It catalyses the reaction 3,4-dihydroxyphenylacetaldehyde + NAD(+) + H2O = 3,4-dihydroxyphenylacetate + NADH + 2 H(+). The enzyme catalyses spermine monoaldehyde + NAD(+) + H2O = N-(2-carboxyethyl)spermidine + NADH + 2 H(+). The catalysed reaction is propanal + NAD(+) + H2O = propanoate + NADH + 2 H(+). It carries out the reaction butanal + NAD(+) + H2O = butanoate + NADH + 2 H(+). It catalyses the reaction pentanal + NAD(+) + H2O = pentanoate + NADH + 2 H(+). The enzyme catalyses hexanal + NAD(+) + H2O = hexanoate + NADH + 2 H(+). It functions in the pathway amine and polyamine biosynthesis; carnitine biosynthesis. Functionally, converts gamma-trimethylaminobutyraldehyde into gamma-butyrobetaine with high efficiency (in vitro). Can catalyze the irreversible oxidation of a broad range of aldehydes to the corresponding acids in an NAD-dependent reaction, but with low efficiency. Catalyzes the oxidation of aldehydes arising from biogenic amines and polyamines. The protein is 4-trimethylaminobutyraldehyde dehydrogenase (Aldh9a1) of Rattus norvegicus (Rat).